The primary structure comprises 136 residues: Large ribosomal subunit protein uL16 (136 aa).

This sequence belongs to the universal ribosomal protein uL16 family. In terms of assembly, part of the 50S ribosomal subunit.

Functionally, binds 23S rRNA and is also seen to make contacts with the A and possibly P site tRNAs. This chain is Large ribosomal subunit protein uL16, found in Pseudoalteromonas atlantica (strain T6c / ATCC BAA-1087).